Consider the following 39-residue polypeptide: Cytochrome b559 subunit beta (39 aa).

The helical transmembrane segment at 14–30 (WLAVHGLAVPTVFFLGS) threads the bilayer. Position 18 (H18) interacts with heme.

It belongs to the PsbE/PsbF family. As to quaternary structure, heterodimer of an alpha subunit and a beta subunit. PSII is composed of 1 copy each of membrane proteins PsbA, PsbB, PsbC, PsbD, PsbE, PsbF, PsbH, PsbI, PsbJ, PsbK, PsbL, PsbM, PsbT, PsbX, PsbY, PsbZ, Psb30/Ycf12, at least 3 peripheral proteins of the oxygen-evolving complex and a large number of cofactors. It forms dimeric complexes. Requires heme b as cofactor.

It localises to the plastid. The protein resides in the chloroplast thylakoid membrane. In terms of biological role, this b-type cytochrome is tightly associated with the reaction center of photosystem II (PSII). PSII is a light-driven water:plastoquinone oxidoreductase that uses light energy to abstract electrons from H(2)O, generating O(2) and a proton gradient subsequently used for ATP formation. It consists of a core antenna complex that captures photons, and an electron transfer chain that converts photonic excitation into a charge separation. The chain is Cytochrome b559 subunit beta from Welwitschia mirabilis (Tree tumbo).